A 4699-amino-acid polypeptide reads, in one-letter code: Fat-like cadherin-related tumor suppressor homolog (4699 aa).

The signal sequence occupies residues 1–38 (MFTMKIKKYVTPVKRKAFTILQWISLLCSLWLIPTVQS). Over 39–4285 (KADEKHTATL…KNFSIEHISG (4247 aa)) the chain is Extracellular. Cadherin domains lie at 63 to 183 (SHSV…SPLF), 184 to 291 (YPTQ…APEI), 288 to 400 (APEI…IPIF), 401 to 507 (TQEI…DPIF), 508 to 613 (ENVN…RPQF), 614 to 716 (ERVN…SSIL), 773 to 877 (VNFP…RPVI), 878 to 980 (QKTL…APVF), 981 to 1088 (GVQE…APEF), 1089 to 1198 (DDFV…KPVY), 1194 to 1299 (DKPV…SPEF), 1300 to 1405 (DQRV…APLI), 1408 to 1506 (KTSE…PPQF), 1507 to 1612 (AKDV…HPEF), 1613 to 1717 (TAKI…PPKF), 1718 to 1815 (PTNN…IPYF), 1816 to 1932 (VQNE…PPVF), 1933 to 2033 (NERE…NFAF), 2034 to 2140 (QRES…CPLF), 2141 to 2241 (VNMP…MPVF), 2242 to 2341 (EKQF…YPEI), 2342 to 2449 (ESDI…APCF), 2450 to 2551 (VEPS…SPLF), 2552 to 2654 (DQST…VPYF), 2655 to 2763 (LLKE…IPTF), 2764 to 2860 (EKSS…YPKF), 2861 to 2967 (DNTF…APVF), 2968 to 3072 (KLPI…KPRY), 3068 to 3169 (LKPR…MPIF), 3170 to 3273 (SMAQ…PPEF), 3274 to 3378 (SMRQ…SPTF), 3379 to 3483 (LQNL…APIF), 3484 to 3588 (SSSN…PPIV), and 3589 to 3696 (TPLE…VIRF). 2 N-linked (GlcNAc...) asparagine glycosylation sites follow: asparagine 68 and asparagine 159. Asparagine 367 carries an N-linked (GlcNAc...) asparagine glycan. Residues asparagine 782, asparagine 846, and asparagine 926 are each glycosylated (N-linked (GlcNAc...) asparagine). Residues asparagine 1109, asparagine 1201, asparagine 1315, asparagine 1442, asparagine 1476, and asparagine 1514 are each glycosylated (N-linked (GlcNAc...) asparagine). Intrachain disulfides connect cysteine 3807/cysteine 3819, cysteine 3814/cysteine 3851, cysteine 3853/cysteine 3862, cysteine 3869/cysteine 3880, cysteine 3874/cysteine 3891, cysteine 3893/cysteine 3902, cysteine 4071/cysteine 4105, cysteine 4117/cysteine 4128, cysteine 4122/cysteine 4138, cysteine 4140/cysteine 4149, cysteine 4156/cysteine 4167, cysteine 4161/cysteine 4177, cysteine 4179/cysteine 4188, cysteine 4194/cysteine 4205, cysteine 4199/cysteine 4214, cysteine 4216/cysteine 4224, cysteine 4231/cysteine 4242, cysteine 4236/cysteine 4251, and cysteine 4253/cysteine 4262. Residues 3865 to 3903 (TVNACSTDPCSPQRICMPSGSALGYQCVCPKGFSGTYCE) enclose the EGF-like 1 domain. Residues 3921-4105 (AVSFGGKSYA…KRFTNVEFKC (185 aa)) form the Laminin G-like domain. EGF-like domains follow at residues 4113–4150 (RLGI…KHCE), 4152–4189 (DLDP…KRCE), 4190–4225 (YGKF…PTCE), and 4227–4263 (DVDE…ASCG). A helical membrane pass occupies residues 4286-4306 (IISGVAVVLVIISCVLCCVVL). The Cytoplasmic segment spans residues 4307-4699 (KRSSSSKRRN…EFLPQQQTNN (393 aa)).

As to expression, localizes where basal actin filaments terminate.

The protein resides in the cell membrane. Required for the planar polarity of actin filament orientation at the basal side of ovarian follicle cells. Required for proper egg chamber shape and elongation of the egg chamber during oogenesis. Required for the correct planar polarization of Rab10 within the basal follicle cell epithelium and is therefore indirectly involved in the Rab10-dependent remodeling of the basal membrane during egg chamber elongation. This Drosophila melanogaster (Fruit fly) protein is Fat-like cadherin-related tumor suppressor homolog (kug).